The primary structure comprises 234 residues: Large ribosomal subunit protein uL1 (234 aa).

The protein belongs to the universal ribosomal protein uL1 family. As to quaternary structure, part of the 50S ribosomal subunit.

Its function is as follows. Binds directly to 23S rRNA. The L1 stalk is quite mobile in the ribosome, and is involved in E site tRNA release. In terms of biological role, protein L1 is also a translational repressor protein, it controls the translation of the L11 operon by binding to its mRNA. The polypeptide is Large ribosomal subunit protein uL1 (Edwardsiella ictaluri (strain 93-146)).